The following is a 613-amino-acid chain: Transcription factor Sp2 (613 aa).

The tract at residues 1 to 32 is disordered; that stretch reads MSDPQTSMAATAAVSPSDYLQPAASTTQDSQP. Residues 23-32 are compositionally biased toward polar residues; sequence AASTTQDSQP. Ser-78 carries the phosphoserine modification. 2 disordered regions span residues 170–197 and 225–255; these read SPSS…AQSG and PGAA…LPAA. Residues 185–197 show a composition bias toward polar residues; sequence QKSSTTTTPAQSG. The 9aaTAD; inactive motif lies at 361-369; the sequence is GEVQTVLVQ. The span at 374–392 shows a compositional bias: low complexity; sequence ATAATASTTTCSSPASRAA. The segment at 374–402 is disordered; it reads ATAATASTTTCSSPASRAAHLSGTSKKHS. 3 consecutive C2H2-type zinc fingers follow at residues 525-549, 555-579, and 585-607; these read HVCH…VRLH, FVCN…ARTH, and FECA…YKTH.

It belongs to the Sp1 C2H2-type zinc-finger protein family.

It localises to the nucleus. Functionally, binds to GC box promoters elements and selectively activates mRNA synthesis from genes that contain functional recognition sites. The protein is Transcription factor Sp2 (SP2) of Bos taurus (Bovine).